Consider the following 265-residue polypeptide: Putative 2-aminoethylphosphonate transport system permease protein PhnV (265 aa).

6 consecutive transmembrane segments (helical) span residues 13 to 33 (GVVA…VILM), 69 to 89 (LTIG…AALA), 104 to 124 (VFYL…LVAF), 131 to 151 (MNGT…AFTF), 185 to 205 (LPLL…LSMG), and 233 to 253 (NIAD…LLMM). An ABC transmembrane type-1 domain is found at 65 to 253 (LLASLTIGFC…LVAITLLLMM (189 aa)).

The protein belongs to the binding-protein-dependent transport system permease family.

The protein localises to the cell inner membrane. In terms of biological role, probably part of the PhnSTUV complex (TC 3.A.1.11.5) involved in 2-aminoethylphosphonate import. Probably responsible for the translocation of the substrate across the membrane. This chain is Putative 2-aminoethylphosphonate transport system permease protein PhnV (phnV), found in Salmonella paratyphi A (strain ATCC 9150 / SARB42).